The chain runs to 167 residues: MFPMVTGFMNYGQQTIRAARYIGQSFMITLSQANRLPVTIQYPYEKLIPSERFRGRIHFEFDKCIACEVCVRVCPIDLPVVDWKFETDIRKKRLLNYSIDFGICIFCGNCVEYCPTNCLSMTEEYELATYDRHELNYNQIALGRLPMSVIDDFTIRTVLNSPQRKNV.

4Fe-4S ferredoxin-type domains lie at 55 to 84 (GRIH…VDWK) and 95 to 124 (LNYS…MTEE). Cysteine 64, cysteine 67, cysteine 70, cysteine 74, cysteine 104, cysteine 107, cysteine 110, and cysteine 114 together coordinate [4Fe-4S] cluster.

The protein belongs to the complex I 23 kDa subunit family. In terms of assembly, NDH is composed of at least 16 different subunits, 5 of which are encoded in the nucleus. [4Fe-4S] cluster serves as cofactor.

Its subcellular location is the plastid. It localises to the chloroplast thylakoid membrane. It carries out the reaction a plastoquinone + NADH + (n+1) H(+)(in) = a plastoquinol + NAD(+) + n H(+)(out). The enzyme catalyses a plastoquinone + NADPH + (n+1) H(+)(in) = a plastoquinol + NADP(+) + n H(+)(out). In terms of biological role, NDH shuttles electrons from NAD(P)H:plastoquinone, via FMN and iron-sulfur (Fe-S) centers, to quinones in the photosynthetic chain and possibly in a chloroplast respiratory chain. The immediate electron acceptor for the enzyme in this species is believed to be plastoquinone. Couples the redox reaction to proton translocation, and thus conserves the redox energy in a proton gradient. The polypeptide is NAD(P)H-quinone oxidoreductase subunit I, chloroplastic (Citrus sinensis (Sweet orange)).